The following is a 209-amino-acid chain: Protein Bel-1 (209 aa).

Disordered regions lie at residues 1 to 30, 123 to 143, and 156 to 185; these read MASK…LDLT, FLNS…PATS, and CSRP…GESG. Composition is skewed to polar residues over residues 21-30 and 132-143; these read SHSTSGLDLT and TPKTDPTRPATS.

Its function is as follows. Transcriptional transactivator that activates the viral internal promoter (IP), thereby enhancing its own expression. This transactivation is repressed by nuclear factor I. Also transactivates the long terminal repeat (LTR) promoter, thereby inducing structural gene expression, initiating the late phase of infection. It is therefore a key regulator of viral gene expression. It directly binds to and activates DNA target sites of viral promoters and those of distinct cellular genes. Required for viral replication. The protein is Protein Bel-1 (bel1) of Felis catus (Cat).